The primary structure comprises 324 residues: Pancreas transcription factor 1 subunit alpha (324 aa).

Residues 160 to 212 (QLRQAANVRERRRMQSINDAFEGLRSHIPTLPYEKRLSKVDTLRLAIGYINFL) enclose the bHLH domain. Positions 302–324 (DPRKLNSKSFDNIENEPPFEFVS) are disordered.

As to quaternary structure, component of the pancreas transcription factor 1 complex (PTF1) which is composed of TCF3/p75, TCF12/p64 and PTF1A/p48. TCF3 is responsible for the nuclear import of the p48/p64 complex. Interacts with TCF3 and RBPSUH/RBP-Jkappa. In terms of tissue distribution, expressed in precursors of pancreatic islets, acini and ducts.

The protein localises to the nucleus. Its subcellular location is the cytoplasm. Transcription factor implicated in the cell fate determination in various organs. Binds to the E-box consensus sequence 5'-CANNTG-3'. Plays a role in early and late pancreas development and differentiation. Important for determining whether cells allocated to the pancreatic buds continue towards pancreatic organogenesis or revert back to duodenal fates. May be involved in the maintenance of exocrine pancreas-specific gene expression including ELA1 and amylase. Required for the formation of pancreatic acinar and ductal cells. Plays an important role in cerebellar development. Directly regulated by FOXN4 and RORC during retinal development, FOXN4-PTF1A pathway plays a central role in directing the differentiation of retinal progenitors towards horizontal and amacrine fates. The chain is Pancreas transcription factor 1 subunit alpha (Ptf1a) from Mus musculus (Mouse).